The following is a 338-amino-acid chain: Large ribosomal subunit protein uL3 (338 aa).

Residues 1–37 are disordered; the sequence is MPQPSRPRKGSMGFSPRKRAESEVPRIRSWASNDGAP.

The protein belongs to the universal ribosomal protein uL3 family. In terms of assembly, part of the 50S ribosomal subunit. Forms a cluster with proteins L14 and L24e.

In terms of biological role, one of the primary rRNA binding proteins, it binds directly near the 3'-end of the 23S rRNA, where it nucleates assembly of the 50S subunit. This is Large ribosomal subunit protein uL3 from Haloquadratum walsbyi (strain DSM 16790 / HBSQ001).